The primary structure comprises 405 residues: Argininosuccinate synthase (405 aa).

ATP-binding positions include 10-18 (AYSGGLDTS) and Ala-37. L-citrulline is bound by residues Tyr-88 and Ser-93. Gly-118 contributes to the ATP binding site. The L-aspartate site is built by Thr-120, Asn-124, and Asp-125. Residue Asn-124 participates in L-citrulline binding. L-citrulline-binding residues include Arg-128, Ser-179, Ser-188, Glu-264, and Tyr-276.

The protein belongs to the argininosuccinate synthase family. Type 1 subfamily. As to quaternary structure, homotetramer.

Its subcellular location is the cytoplasm. The catalysed reaction is L-citrulline + L-aspartate + ATP = 2-(N(omega)-L-arginino)succinate + AMP + diphosphate + H(+). It participates in amino-acid biosynthesis; L-arginine biosynthesis; L-arginine from L-ornithine and carbamoyl phosphate: step 2/3. The sequence is that of Argininosuccinate synthase from Pseudomonas fluorescens (strain Pf0-1).